Consider the following 452-residue polypeptide: UDP-N-acetylmuramoylalanine--D-glutamate ligase (452 aa).

Residue 115 to 121 (GTNGKTT) coordinates ATP.

The protein belongs to the MurCDEF family.

The protein resides in the cytoplasm. It carries out the reaction UDP-N-acetyl-alpha-D-muramoyl-L-alanine + D-glutamate + ATP = UDP-N-acetyl-alpha-D-muramoyl-L-alanyl-D-glutamate + ADP + phosphate + H(+). It participates in cell wall biogenesis; peptidoglycan biosynthesis. Cell wall formation. Catalyzes the addition of glutamate to the nucleotide precursor UDP-N-acetylmuramoyl-L-alanine (UMA). This is UDP-N-acetylmuramoylalanine--D-glutamate ligase from Elusimicrobium minutum (strain Pei191).